The sequence spans 80 residues: Lantibiotic Flvalpha.b (80 aa).

A propeptide spans 1-38 (MNKNPIYRSEEEAKNIACGNVAAELDENSQALDAINGA) (cleaved by FlvT). 2,3-didehydrobutyrine; by FlvM1 occurs at positions 43 and 47. Residues 52–55 (TVGC) constitute a cross-link (beta-methyllanthionine (Thr-Cys); by FlvM1). The lanthionine (Ser-Cys); by FlvM1 cross-link spans 58-68 (SYGLGNGGYCC). 2 consecutive cross-links (beta-methyllanthionine (Thr-Cys); by FlvM1) follow at residues 69-74 (TYTVEC) and 71-78 (TVECSKTC).

Post-translationally, the lanthionine formed by Ser-58 and Cys-68 forms a putative lipid II binding motif. In terms of processing, maturation of FlvA1 peptides involves the enzymatic conversion of Thr, and Ser into dehydrated AA and the formation of thioether bonds with cysteines. Modifications are processed by the flavecin synthetase FlvM1. This is followed by membrane translocation and cleavage of the modified precursor. Contains DL-lanthionine and DL-beta-methyllanthionine, when coepressed in E.coli with the flavecin synthetase FlvM1.

Its subcellular location is the secreted. Its function is as follows. Lanthionine-containing peptide antibiotic (lantibiotic) only active on Gram-positive bacteria in synergy with Flvbeta peptides, which are encoded by the same operon than Flvalpha.a. Shows antibacterial activity in synergy with Flvbeta.b, Flvbeta.c, Flvbeta.e and Flvbeta.g. Does not show antibacterial activity when tested with Flvbeta.a, Flvbeta.d, Flvbeta.f and Flvbeta.h. The bactericidal activity of lantibiotics is based on depolarization of energized bacterial cytoplasmic membranes, initiated by the formation of aqueous transmembrane pores. The protein is Lantibiotic Flvalpha.b of Ruminococcus flavefaciens.